Here is a 30-residue protein sequence, read N- to C-terminus: Bowman-Birk type proteinase inhibitor 4 (30 aa).

2 disulfide bridges follow: C9–C24 and C14–C22.

Inhibits trypsin (IC(50)=17.60 nM) and, to a lesser extent, alpha-chymotrypsin (IC(50)=2.38 uM). This chain is Bowman-Birk type proteinase inhibitor 4, found in Lathyrus sativus (White vetchling).